The chain runs to 218 residues: Small ribosomal subunit protein uS3c (218 aa).

The 72-residue stretch at 47–118 folds into the KH type-2 domain; sequence VQNNIRISSG…KLNIAITRIS (72 aa).

This sequence belongs to the universal ribosomal protein uS3 family. As to quaternary structure, part of the 30S ribosomal subunit.

The protein resides in the plastid. It is found in the chloroplast. The chain is Small ribosomal subunit protein uS3c (rps3) from Draba nemorosa (Woodland whitlowgrass).